A 364-amino-acid polypeptide reads, in one-letter code: MANKTVLFNKHLESNGKMVDFHGWDMPLNYGSQIEEHHAVRQDAGMFDVSHMTVVDVIGDDACAFLRKLLANDVAKLKVPGKALYGGMLDHNGGVIDDLITYYLSDTEYRIVVNSATREKDLAWINEQVKGFSVEVTERPELAMIAVQGPNAKAKAATVFNDAQNAAIEGMKPFFGVQAGSLFIATTGYTGETGYEVIVPNDEAEALWQAFLDAGIKPCGLGARDTLRLEAGMNLYGLDMDESVNPLAANMGWTVAWEPAERDFNGRQALEKIKAEGTDKLVGLIMDAKGVIRHGMSVFFTDSDGVEQQGTITSGTFSPTLGYSIAMARVPRSIGDVAEVEMRKKRVPVKVIAPSFVRNGKQAF.

This sequence belongs to the GcvT family. In terms of assembly, the glycine cleavage system is composed of four proteins: P, T, L and H.

It carries out the reaction N(6)-[(R)-S(8)-aminomethyldihydrolipoyl]-L-lysyl-[protein] + (6S)-5,6,7,8-tetrahydrofolate = N(6)-[(R)-dihydrolipoyl]-L-lysyl-[protein] + (6R)-5,10-methylene-5,6,7,8-tetrahydrofolate + NH4(+). In terms of biological role, the glycine cleavage system catalyzes the degradation of glycine. This Shewanella pealeana (strain ATCC 700345 / ANG-SQ1) protein is Aminomethyltransferase.